Here is a 726-residue protein sequence, read N- to C-terminus: DNA-directed RNA polymerase subunit beta N-terminal section (726 aa).

The protein belongs to the RNA polymerase beta chain family. In plastids the minimal PEP RNA polymerase catalytic core is composed of four subunits: alpha, beta, beta', and beta''. When a (nuclear-encoded) sigma factor is associated with the core the holoenzyme is formed, which can initiate transcription.

The protein localises to the plastid. It localises to the chloroplast. It carries out the reaction RNA(n) + a ribonucleoside 5'-triphosphate = RNA(n+1) + diphosphate. Its function is as follows. DNA-dependent RNA polymerase catalyzes the transcription of DNA into RNA using the four ribonucleoside triphosphates as substrates. The chain is DNA-directed RNA polymerase subunit beta N-terminal section (rpoB1) from Tetradesmus obliquus (Green alga).